Reading from the N-terminus, the 293-residue chain is Bifunctional protein FolD (293 aa).

NADP(+) contacts are provided by residues 165–167, S190, and I231; that span reads GRS.

Belongs to the tetrahydrofolate dehydrogenase/cyclohydrolase family. In terms of assembly, homodimer.

The enzyme catalyses (6R)-5,10-methylene-5,6,7,8-tetrahydrofolate + NADP(+) = (6R)-5,10-methenyltetrahydrofolate + NADPH. It catalyses the reaction (6R)-5,10-methenyltetrahydrofolate + H2O = (6R)-10-formyltetrahydrofolate + H(+). It participates in one-carbon metabolism; tetrahydrofolate interconversion. In terms of biological role, catalyzes the oxidation of 5,10-methylenetetrahydrofolate to 5,10-methenyltetrahydrofolate and then the hydrolysis of 5,10-methenyltetrahydrofolate to 10-formyltetrahydrofolate. In Synechococcus sp. (strain WH7803), this protein is Bifunctional protein FolD.